Reading from the N-terminus, the 693-residue chain is Kinesin-like protein KIFC1 (693 aa).

Disordered regions lie at residues 1 to 24 (MRGR…VRTT) and 48 to 156 (VKSS…KRPA). Low complexity-rich tracts occupy residues 49-59 (KSSSRLPLPGS) and 127-138 (QKPAPAAPAQKP). Serine 52 and serine 59 each carry phosphoserine. Residues 165-334 (DLHEELKQYR…QELKGNIRVF (170 aa)) are a coiled coil. The 354-residue stretch at 330 to 683 (NIRVFCRVRP…LRFASKVNQC (354 aa)) folds into the Kinesin motor domain. At threonine 379 the chain carries Phosphothreonine. 430 to 437 (GQTGSGKT) is a binding site for ATP.

It belongs to the TRAFAC class myosin-kinesin ATPase superfamily. Kinesin family. NCD subfamily. In terms of assembly, binds NUBP1 and NUBP2. Interacts with PPP1R42.

Its subcellular location is the nucleus. The protein resides in the cytoplasm. It is found in the cytoskeleton. The protein localises to the microtubule organizing center. It localises to the centrosome. Its subcellular location is the spindle. The protein resides in the early endosome. In terms of biological role, minus end-directed microtubule-dependent motor required for bipolar spindle formation. May contribute to movement of early endocytic vesicles. Regulates cilium formation and structure. The protein is Kinesin-like protein KIFC1 of Rattus norvegicus (Rat).